Here is a 380-residue protein sequence, read N- to C-terminus: Probable dual-specificity RNA methyltransferase RlmN (380 aa).

Glutamate 123 (proton acceptor) is an active-site residue. The 234-residue stretch at 129 to 362 folds into the Radical SAM core domain; sequence HEYGNSVCVT…VTIRREQGSD (234 aa). A disulfide bridge links cysteine 136 with cysteine 367. [4Fe-4S] cluster contacts are provided by cysteine 143, cysteine 147, and cysteine 150. Residues 193 to 194, serine 225, 248 to 250, and asparagine 324 contribute to the S-adenosyl-L-methionine site; these read GE and SLH. Cysteine 367 (S-methylcysteine intermediate) is an active-site residue.

It belongs to the radical SAM superfamily. RlmN family. [4Fe-4S] cluster serves as cofactor.

The protein resides in the cytoplasm. The catalysed reaction is adenosine(2503) in 23S rRNA + 2 reduced [2Fe-2S]-[ferredoxin] + 2 S-adenosyl-L-methionine = 2-methyladenosine(2503) in 23S rRNA + 5'-deoxyadenosine + L-methionine + 2 oxidized [2Fe-2S]-[ferredoxin] + S-adenosyl-L-homocysteine. The enzyme catalyses adenosine(37) in tRNA + 2 reduced [2Fe-2S]-[ferredoxin] + 2 S-adenosyl-L-methionine = 2-methyladenosine(37) in tRNA + 5'-deoxyadenosine + L-methionine + 2 oxidized [2Fe-2S]-[ferredoxin] + S-adenosyl-L-homocysteine. In terms of biological role, specifically methylates position 2 of adenine 2503 in 23S rRNA and position 2 of adenine 37 in tRNAs. The protein is Probable dual-specificity RNA methyltransferase RlmN of Lysinibacillus sphaericus (strain C3-41).